A 149-amino-acid polypeptide reads, in one-letter code: Large ribosomal subunit protein uL15C (149 aa).

The segment at 21-40 (RIGKHRKQRGGRGNAGGQHH) is disordered.

The protein belongs to the universal ribosomal protein uL15 family. Component of the large ribosomal subunit.

It localises to the cytoplasm. The protein localises to the cytosol. Its subcellular location is the endoplasmic reticulum. Component of the large ribosomal subunit. The ribosome is a large ribonucleoprotein complex responsible for the synthesis of proteins in the cell. This Entamoeba histolytica (strain ATCC 30459 / HM-1:IMSS / ABRM) protein is Large ribosomal subunit protein uL15C (rpl27a-3).